We begin with the raw amino-acid sequence, 147 residues long: Prefoldin subunit alpha (147 aa).

It belongs to the prefoldin alpha subunit family. As to quaternary structure, heterohexamer of two alpha and four beta subunits.

It is found in the cytoplasm. Molecular chaperone capable of stabilizing a range of proteins. Seems to fulfill an ATP-independent, HSP70-like function in archaeal de novo protein folding. The polypeptide is Prefoldin subunit alpha (Saccharolobus islandicus (strain M.16.27) (Sulfolobus islandicus)).